The sequence spans 561 residues: Arginine--tRNA ligase (561 aa).

The 'HIGH' region motif lies at 136 to 146 (ANPTGLLHMGN).

It belongs to the class-I aminoacyl-tRNA synthetase family. In terms of assembly, monomer.

Its subcellular location is the cytoplasm. It catalyses the reaction tRNA(Arg) + L-arginine + ATP = L-arginyl-tRNA(Arg) + AMP + diphosphate. This Desulforamulus reducens (strain ATCC BAA-1160 / DSM 100696 / MI-1) (Desulfotomaculum reducens) protein is Arginine--tRNA ligase.